The sequence spans 92 residues: Small ribosomal subunit protein uS19 (92 aa).

This sequence belongs to the universal ribosomal protein uS19 family.

Functionally, protein S19 forms a complex with S13 that binds strongly to the 16S ribosomal RNA. The sequence is that of Small ribosomal subunit protein uS19 from Tolumonas auensis (strain DSM 9187 / NBRC 110442 / TA 4).